Reading from the N-terminus, the 125-residue chain is Large ribosomal subunit protein bL12 (125 aa).

The protein belongs to the bacterial ribosomal protein bL12 family. As to quaternary structure, homodimer. Part of the ribosomal stalk of the 50S ribosomal subunit. Forms a multimeric L10(L12)X complex, where L10 forms an elongated spine to which 2 to 4 L12 dimers bind in a sequential fashion. Binds GTP-bound translation factors.

Forms part of the ribosomal stalk which helps the ribosome interact with GTP-bound translation factors. Is thus essential for accurate translation. In Rickettsia prowazekii (strain Madrid E), this protein is Large ribosomal subunit protein bL12.